The sequence spans 278 residues: Probable velvet family sexual development regulator SCHCODRAFT_28806 (278 aa).

Residues 51 to 255 (GRTIRASLDE…ARVGVRLSVR (205 aa)) enclose the Velvet domain. Positions 257–278 (TGKKATTKRRKRSDSFDEDDSS) are disordered.

It belongs to the velvet family.

The protein localises to the nucleus. Its function is as follows. Velvet-domain-containing protein that probably acts as a positive regulator of sexual development. The sequence is that of Probable velvet family sexual development regulator SCHCODRAFT_28806 from Schizophyllum commune (strain H4-8 / FGSC 9210) (Split gill fungus).